Reading from the N-terminus, the 776-residue chain is DNA ligase (776 aa).

NAD(+)-binding positions include aspartate 31 to aspartate 35, serine 80 to leucine 81, and glutamate 112. The N6-AMP-lysine intermediate role is filled by lysine 114. 4 residues coordinate NAD(+): arginine 135, glutamate 172, lysine 288, and lysine 312. 4 residues coordinate Zn(2+): cysteine 406, cysteine 409, cysteine 436, and cysteine 442. Residues alanine 693–valine 776 form the BRCT domain.

The protein belongs to the NAD-dependent DNA ligase family. LigA subfamily. Mg(2+) serves as cofactor. Mn(2+) is required as a cofactor.

The enzyme catalyses NAD(+) + (deoxyribonucleotide)n-3'-hydroxyl + 5'-phospho-(deoxyribonucleotide)m = (deoxyribonucleotide)n+m + AMP + beta-nicotinamide D-nucleotide.. DNA ligase that catalyzes the formation of phosphodiester linkages between 5'-phosphoryl and 3'-hydroxyl groups in double-stranded DNA using NAD as a coenzyme and as the energy source for the reaction. It is essential for DNA replication and repair of damaged DNA. This chain is DNA ligase, found in Pseudomonas putida (strain ATCC 47054 / DSM 6125 / CFBP 8728 / NCIMB 11950 / KT2440).